Consider the following 148-residue polypeptide: MELNELRPAVGATKDRKRIGRGPGSGHGKTATKGHKGQKARSGGSVKPGFEGGQMPMQRRLPKRGFTPLTRKEYALVNVGQLEVFEAGSCIDVEALLNAGLIGGVKDGLKVLADGDLTKPLTVKAHKFSAKAKEKIAAAGGTVEEISL.

The disordered stretch occupies residues 1-61 (MELNELRPAV…GGQMPMQRRL (61 aa)). Basic residues predominate over residues 30–39 (TATKGHKGQK).

This sequence belongs to the universal ribosomal protein uL15 family. In terms of assembly, part of the 50S ribosomal subunit.

Binds to the 23S rRNA. The sequence is that of Large ribosomal subunit protein uL15 from Geobacter sulfurreducens (strain ATCC 51573 / DSM 12127 / PCA).